A 1238-amino-acid polypeptide reads, in one-letter code: Topoisomerase 1-associated factor 1 (1238 aa).

Phosphoserine occurs at positions 626 and 654. The disordered stretch occupies residues 1008–1051 (GIARSKKKDKRKRRKGEAKTNLPMFGDQDDERPQTVRERHGVFS). Basic residues predominate over residues 1010–1023 (ARSKKKDKRKRRKG). Basic and acidic residues predominate over residues 1038–1050 (ERPQTVRERHGVF). Phosphoserine occurs at positions 1056 and 1058. The segment at 1159 to 1218 (NNNNNQLSDDDVNSESRNSLGSSQPSNSQNMFQSEVYSRKESTKRSLEASAADESDEDEE) is disordered. A compositionally biased stretch (polar residues) spans 1173–1194 (ESRNSLGSSQPSNSQNMFQSEV). Over residues 1195–1205 (YSRKESTKRSL) the composition is skewed to basic and acidic residues. Residues 1209–1218 (AADESDEDEE) show a composition bias toward acidic residues. At Ser-1213 the chain carries Phosphoserine.

The protein belongs to the timeless family. As to quaternary structure, component of the fork protection complex (FPC) consisting of TOF1 and CSM3. Interacts with WSS1 and ESC4.

The protein resides in the nucleus. Its function is as follows. Forms a fork protection complex (FPC) with CSM3 and which is required for chromosome segregation during meiosis and DNA damage repair. FPC coordinates leading and lagging strand synthesis and moves with the replication fork. FPC stabilizes replication forks in a configuration that is recognized by replication checkpoint sensors and protects stalled replication forks against the fork-releasing activity of RRM3 helicase. This is Topoisomerase 1-associated factor 1 (TOF1) from Saccharomyces cerevisiae (strain ATCC 204508 / S288c) (Baker's yeast).